The chain runs to 319 residues: 4-hydroxy-3-methylbut-2-enyl diphosphate reductase (319 aa).

Cysteine 17 contacts [4Fe-4S] cluster. Histidine 46 and histidine 79 together coordinate (2E)-4-hydroxy-3-methylbut-2-enyl diphosphate. Dimethylallyl diphosphate is bound by residues histidine 46 and histidine 79. Isopentenyl diphosphate is bound by residues histidine 46 and histidine 79. Cysteine 101 serves as a coordination point for [4Fe-4S] cluster. Histidine 129 serves as a coordination point for (2E)-4-hydroxy-3-methylbut-2-enyl diphosphate. Histidine 129 is a dimethylallyl diphosphate binding site. Histidine 129 contributes to the isopentenyl diphosphate binding site. Glutamate 131 (proton donor) is an active-site residue. Position 170 (threonine 170) interacts with (2E)-4-hydroxy-3-methylbut-2-enyl diphosphate. Residue cysteine 200 participates in [4Fe-4S] cluster binding. Serine 228, serine 229, asparagine 230, and serine 273 together coordinate (2E)-4-hydroxy-3-methylbut-2-enyl diphosphate. Dimethylallyl diphosphate contacts are provided by serine 228, serine 229, asparagine 230, and serine 273. 4 residues coordinate isopentenyl diphosphate: serine 228, serine 229, asparagine 230, and serine 273.

The protein belongs to the IspH family. The cofactor is [4Fe-4S] cluster.

It carries out the reaction isopentenyl diphosphate + 2 oxidized [2Fe-2S]-[ferredoxin] + H2O = (2E)-4-hydroxy-3-methylbut-2-enyl diphosphate + 2 reduced [2Fe-2S]-[ferredoxin] + 2 H(+). The catalysed reaction is dimethylallyl diphosphate + 2 oxidized [2Fe-2S]-[ferredoxin] + H2O = (2E)-4-hydroxy-3-methylbut-2-enyl diphosphate + 2 reduced [2Fe-2S]-[ferredoxin] + 2 H(+). Its pathway is isoprenoid biosynthesis; dimethylallyl diphosphate biosynthesis; dimethylallyl diphosphate from (2E)-4-hydroxy-3-methylbutenyl diphosphate: step 1/1. The protein operates within isoprenoid biosynthesis; isopentenyl diphosphate biosynthesis via DXP pathway; isopentenyl diphosphate from 1-deoxy-D-xylulose 5-phosphate: step 6/6. Catalyzes the conversion of 1-hydroxy-2-methyl-2-(E)-butenyl 4-diphosphate (HMBPP) into a mixture of isopentenyl diphosphate (IPP) and dimethylallyl diphosphate (DMAPP). Acts in the terminal step of the DOXP/MEP pathway for isoprenoid precursor biosynthesis. The polypeptide is 4-hydroxy-3-methylbut-2-enyl diphosphate reductase (Cereibacter sphaeroides (strain ATCC 17023 / DSM 158 / JCM 6121 / CCUG 31486 / LMG 2827 / NBRC 12203 / NCIMB 8253 / ATH 2.4.1.) (Rhodobacter sphaeroides)).